Consider the following 101-residue polypeptide: Small ribosomal subunit protein uS14A (101 aa).

2 disordered regions span residues 1 to 20 (MAKK…VARY) and 28 to 72 (TEII…RPRG). Basic and acidic residues-rich tracts occupy residues 38 to 53 (EAER…RQPR) and 61 to 70 (RNRDSVDGRP).

It belongs to the universal ribosomal protein uS14 family. Part of the 30S ribosomal subunit. Contacts proteins S3 and S10.

In terms of biological role, binds 16S rRNA, required for the assembly of 30S particles and may also be responsible for determining the conformation of the 16S rRNA at the A site. In Streptomyces avermitilis (strain ATCC 31267 / DSM 46492 / JCM 5070 / NBRC 14893 / NCIMB 12804 / NRRL 8165 / MA-4680), this protein is Small ribosomal subunit protein uS14A.